A 148-amino-acid chain; its full sequence is Arginine repressor (148 aa).

Belongs to the ArgR family.

Its subcellular location is the cytoplasm. The protein operates within amino-acid biosynthesis; L-arginine biosynthesis [regulation]. In terms of biological role, regulates arginine biosynthesis genes. In Acidobacterium capsulatum (strain ATCC 51196 / DSM 11244 / BCRC 80197 / JCM 7670 / NBRC 15755 / NCIMB 13165 / 161), this protein is Arginine repressor.